The primary structure comprises 162 residues: Phospholipase A and acyltransferase 3 (162 aa).

Over 1–133 (MRAPIPEPKP…VARSDQVRDV (133 aa)) the chain is Cytoplasmic. In terms of domain architecture, LRAT spans 13-129 (LIEIFRPFYR…LRYGVARSDQ (117 aa)). Active-site residues include histidine 23 and histidine 35. Cysteine 113 serves as the catalytic Acyl-thioester intermediate. The chain crosses the membrane as a helical span at residues 134 to 154 (IIAASAAGMGLAAMSLIGVMF). The Lumenal segment spans residues 155 to 162 (SRNKRQKQ).

Belongs to the H-rev107 family. Interacts with PPP2R1A; this interaction might decrease PP2A activity.

It localises to the cell membrane. The protein resides in the cytoplasm. Its subcellular location is the cytosol. The protein localises to the perinuclear region. It is found in the peroxisome membrane. It localises to the mitochondrion membrane. The protein resides in the nucleus envelope. Its subcellular location is the lysosome membrane. The protein localises to the endoplasmic reticulum membrane. The enzyme catalyses a 1,2-diacyl-sn-glycero-3-phosphocholine + H2O = a 1-acyl-sn-glycero-3-phosphocholine + a fatty acid + H(+). It carries out the reaction a 1,2-diacyl-sn-glycero-3-phosphocholine + H2O = a 2-acyl-sn-glycero-3-phosphocholine + a fatty acid + H(+). It catalyses the reaction 1,2-dihexadecanoyl-sn-glycero-3-phosphocholine + H2O = 1-hexadecanoyl-sn-glycero-3-phosphocholine + hexadecanoate + H(+). The catalysed reaction is 1,2-dihexadecanoyl-sn-glycero-3-phosphocholine + H2O = 2-hexadecanoyl-sn-glycero-3-phosphocholine + hexadecanoate + H(+). The enzyme catalyses 1-hexadecanoyl-2-(9Z-octadecenoyl)-sn-glycero-3-phosphocholine + H2O = 2-(9Z-octadecenoyl)-sn-glycero-3-phosphocholine + hexadecanoate + H(+). It carries out the reaction 1-hexadecanoyl-2-(9Z-octadecenoyl)-sn-glycero-3-phosphocholine + H2O = 1-hexadecanoyl-sn-glycero-3-phosphocholine + (9Z)-octadecenoate + H(+). It catalyses the reaction 1-hexadecanoyl-2-(5Z,8Z,11Z,14Z-eicosatetraenoyl)-sn-glycero-3-phosphocholine + H2O = 1-hexadecanoyl-sn-glycero-3-phosphocholine + (5Z,8Z,11Z,14Z)-eicosatetraenoate + H(+). The catalysed reaction is 1-hexadecanoyl-2-(5Z,8Z,11Z,14Z-eicosatetraenoyl)-sn-glycero-3-phosphocholine + H2O = 2-(5Z,8Z,11Z,14Z)-eicosatetraenoyl-sn-glycero-3-phosphocholine + hexadecanoate + H(+). The enzyme catalyses 1-hexadecanoyl-2-(9Z,12Z-octadecadienoyl)-sn-glycero-3-phosphoethanolamine + H2O = 1-hexadecanoyl-sn-glycero-3-phosphoethanolamine + (9Z,12Z)-octadecadienoate + H(+). It carries out the reaction 1-hexadecanoyl-2-(9Z,12Z-octadecadienoyl)-sn-glycero-3-phosphoethanolamine + H2O = 2-(9Z,12Z)-octadecadienoyl-sn-glycero-3-phosphoethanolamine + hexadecanoate + H(+). It catalyses the reaction 1-hexadecanoyl-2-(5Z,8Z,11Z,14Z-eicosatetraenoyl)-sn-glycero-3-phosphoethanolamine + H2O = 1-hexadecanoyl-sn-glycero-3-phosphoethanolamine + (5Z,8Z,11Z,14Z)-eicosatetraenoate + H(+). The catalysed reaction is 1-hexadecanoyl-2-(5Z,8Z,11Z,14Z-eicosatetraenoyl)-sn-glycero-3-phosphoethanolamine + H2O = 2-(5Z,8Z,11Z,14Z)-eicosatetraenoyl-sn-glycero-3-phosphoethanolamine + hexadecanoate + H(+). The enzyme catalyses 1-hexanoyl-2-acyl-sn-glycero-3-phosphocholine + H2O = hexanoate + a 2-acyl-sn-glycero-3-phosphocholine + H(+). It carries out the reaction 1-hexanoyl-2-acyl-sn-glycero-3-phosphocholine + H2O = 1-hexanoyl-sn-glycero-3-phosphocholine + a fatty acid + H(+). It catalyses the reaction 1,2-diheptadecanoyl-sn-glycero-3-phosphoethanolamine + 1-(9Z-octadecenoyl)-2-hexadecanoyl-sn-glycero-3-phosphocholine = 1,2-diheptadecanoyl-sn-glycero-3-phospho-N-hexadecanoyl-ethanolamine + 1-(9Z-octadecenoyl)-sn-glycero-3-phosphocholine + H(+). The catalysed reaction is 1,2-diheptadecanoyl-sn-glycero-3-phosphoethanolamine + 1-(9Z-octadecenoyl)-2-hexadecanoyl-sn-glycero-3-phosphocholine = 1,2-diheptadecanoyl-sn-glycero-3-phospho-N-(9Z-octadecenoyl)-ethanolamine + 2-hexadecanoyl-sn-glycero-3-phosphocholine + H(+). The enzyme catalyses 1,2-dihexanoyl-sn-glycero-3-phosphoethanolamine + 2-heptanoyl-sn-glycero-3-phosphocholine = hexanoyl-sn-glycero-3-phosphoethanolamine + 1-hexanoyl-2-heptanoyl-sn-glycero-3-phosphocholine. It carries out the reaction 1-hexadecanoyl-2-octadecanoyl-sn-glycero-3-phosphocholine + H2O = octadecanoate + 1-hexadecanoyl-sn-glycero-3-phosphocholine + H(+). It catalyses the reaction 1-hexadecanoyl-2-octadecanoyl-sn-glycero-3-phosphocholine + H2O = 2-octadecanoyl-sn-glycero-3-phosphocholine + hexadecanoate + H(+). The catalysed reaction is 1-octadecanoyl-2-hexadecanoyl-sn-glycero-3-phosphocholine + H2O = 1-octadecanoyl-sn-glycero-3-phosphocholine + hexadecanoate + H(+). The enzyme catalyses 1-octadecanoyl-2-hexadecanoyl-sn-glycero-3-phosphocholine + H2O = 2-hexadecanoyl-sn-glycero-3-phosphocholine + octadecanoate + H(+). It carries out the reaction 1-hexadecanoyl-2-(9Z,12Z-octadecadienoyl)-sn-glycero-3-phosphocholine + H2O = (9Z,12Z)-octadecadienoate + 1-hexadecanoyl-sn-glycero-3-phosphocholine + H(+). It catalyses the reaction 1-hexadecanoyl-2-(9Z,12Z-octadecadienoyl)-sn-glycero-3-phosphocholine + H2O = 2-(9Z,12Z-octadecadienoyl)-sn-glycero-3-phosphocholine + hexadecanoate + H(+). The catalysed reaction is 1,2-di-(9Z-octadecenoyl)-sn-glycero-3-phosphocholine + H2O = 2-(9Z-octadecenoyl)-sn-glycero-3-phosphocholine + (9Z)-octadecenoate + H(+). The enzyme catalyses 1,2-dihexadecanoyl-sn-glycero-3-phosphocholine + H2O = hexadecanoyl-sn-glycero-3-phosphocholine + hexadecanoate + H(+). It carries out the reaction 1,2-di-(9Z-octadecenoyl)-sn-glycero-3-phosphocholine + H2O = 1-(9Z-octadecenoyl)-sn-glycero-3-phosphocholine + (9Z)-octadecenoate + H(+). It catalyses the reaction 1,2-di-(9Z-octadecenoyl)-sn-glycero-3-phosphoethanolamine + 1,2-dihexadecanoyl-sn-glycero-3-phosphocholine = hexadecanoyl-sn-glycero-3-phosphocholine + N-hexadecanoyl-1,2-di-(9Z-octadecenoyl)-sn-glycero-3-phosphoethanolamine + H(+). The catalysed reaction is 1,2-di-(9Z,12Z-octadecadienoyl)-sn-glycero-3-phosphocholine + H2O = 1-(9Z,12Z)-octadecadienoyl-sn-glycero-3-phosphocholine + (9Z,12Z)-octadecadienoate + H(+). Exhibits both phospholipase A1/2 and acyltransferase activities. Shows phospholipase A1 (PLA1) and A2 (PLA2), catalyzing the calcium-independent release of fatty acids from the sn-1 or sn-2 position of glycerophospholipids. For most substrates, PLA1 activity is much higher than PLA2 activity. Shows O-acyltransferase activity, catalyzing the transfer of a fatty acyl group from glycerophospholipid to the hydroxyl group of lysophospholipid. Shows N-acyltransferase activity, catalyzing the calcium-independent transfer of a fatty acyl group at the sn-1 position of phosphatidylcholine (PC) and other glycerophospholipids to the primary amine of phosphatidylethanolamine (PE), forming N-acylphosphatidylethanolamine (NAPE), which serves as precursor for N-acylethanolamines (NAEs). Exhibits high N-acyltransferase activity and low phospholipase A1/2 activity. Required for complete organelle rupture and degradation that occur during eye lens terminal differentiation, when fiber cells that compose the lens degrade all membrane-bound organelles in order to provide lens with transparency to allow the passage of light. Organelle membrane degradation is probably catalyzed by the phospholipase activity. Plays a role in phospholipid metabolism and adipogenesis. In Pongo abelii (Sumatran orangutan), this protein is Phospholipase A and acyltransferase 3.